Consider the following 299-residue polypeptide: KATNB1-like protein 1 (299 aa).

The short motif at 8-15 is the Nuclear localization signal element; that stretch reads VKKRNFSN. At serine 56 the chain carries Phosphoserine.

As to quaternary structure, interacts with KATNA1 and KATNAL1; these interactions are competed by KATNB1 which has a higher affinity for them.

The protein localises to the nucleus. It is found in the cytoplasm. Its subcellular location is the cytoskeleton. It localises to the spindle pole. Functionally, regulates microtubule-severing activity of KATNAL1 in a concentration-dependent manner in vitro. The polypeptide is KATNB1-like protein 1 (Katnbl1) (Mus musculus (Mouse)).